A 499-amino-acid chain; its full sequence is Phenylalanine--tRNA ligase alpha subunit (499 aa).

L-phenylalanine is bound by residues T342, 381–383 (QID), and F422. Residue E424 coordinates Mg(2+). F447 is an L-phenylalanine binding site.

This sequence belongs to the class-II aminoacyl-tRNA synthetase family. Phe-tRNA synthetase alpha subunit type 2 subfamily. As to quaternary structure, tetramer of two alpha and two beta subunits. Mg(2+) serves as cofactor.

Its subcellular location is the cytoplasm. It catalyses the reaction tRNA(Phe) + L-phenylalanine + ATP = L-phenylalanyl-tRNA(Phe) + AMP + diphosphate + H(+). The protein is Phenylalanine--tRNA ligase alpha subunit of Thermococcus gammatolerans (strain DSM 15229 / JCM 11827 / EJ3).